The sequence spans 748 residues: Signal transducer and activator of transcription 4 (748 aa).

The 96-residue stretch at 569-664 (WIDGYVMGFV…ENPLKYLYPD (96 aa)) folds into the SH2 domain. Lys667 is modified (N6-acetyllysine). At Tyr693 the chain carries Phosphotyrosine; by JAK. The residue at position 721 (Ser721) is a Phosphoserine; by MAP2K6.

This sequence belongs to the transcription factor STAT family. As to quaternary structure, forms a homodimer or a heterodimer with a related family member. Interacts with ARL2BP. The SH2 domain interacts, in vitro, with IL12RB2 via a short cytoplasmic domain. Interacts with STAT1. Interacts with JUN; this complex efficiently interacts with the AP-1-related sequence of the IFN-gamma. In terms of processing, acetylation at Lys-667 is required for JAK2-mediated phosphorylation and activation of STAT4. Tyrosine phosphorylated upon IL12 and IFN-alpha activation, but not by IFN-gamma in T-lymphocytes and NK cells. Serine phosphorylation is required for maximal transcriptional activity but not for DNA binding. Phosphorylation by MAP2K6 at Ser-721 is required for full transcriptional activity induced by IL12. However this serine phosphorylation is not required for cell proliferation although critical for IFN-gamma production.

It localises to the cytoplasm. The protein resides in the nucleus. Its function is as follows. Transcriptional regulator mainly expressed in hematopoietic cells that plays a critical role in cellular growth, differentiation and immune response. Plays a key role in the differentiation of T-helper 1 cells and the production of interferon-gamma. Also participates in multiple neutrophil functions including chemotaxis and production of the neutrophil extracellular traps. After IL12 binding to its receptor IL12RB2, STAT4 interacts with the intracellular domain of IL12RB2 and becomes tyrosine phosphorylated. Phosphorylated STAT4 then homodimerizes and migrates to the nucleus where it can recognize STAT target sequences present in IL12 responsive genes. Although IL12 appears to be the predominant activating signal, STAT4 can also be phosphorylated and activated in response to IFN-gamma stimulation via JAK1 and TYK2 and in response to different interleukins including IL23, IL2 and IL35. Transcription activation of IFN-gamma gene is mediated by interaction with JUN that forms a complex that efficiently interacts with the AP-1-related sequence of the IFN-gamma promoter. In response to IFN-alpha/beta signaling, acts as a transcriptional repressor and suppresses IL5 and IL13 mRNA expression during response to T-cell receptor (TCR) activation. The chain is Signal transducer and activator of transcription 4 (STAT4) from Homo sapiens (Human).